Here is a 463-residue protein sequence, read N- to C-terminus: Cysteine--tRNA ligase (463 aa).

Position 29 (cysteine 29) interacts with Zn(2+). The 'HIGH' region signature appears at 31–41 (ATPQTQPHIGH). Positions 212, 237, and 241 each coordinate Zn(2+). The 'KMSKS' region signature appears at 268 to 272 (KMSKS). Lysine 271 is a binding site for ATP.

Belongs to the class-I aminoacyl-tRNA synthetase family. Monomer. Requires Zn(2+) as cofactor.

The protein resides in the cytoplasm. The enzyme catalyses tRNA(Cys) + L-cysteine + ATP = L-cysteinyl-tRNA(Cys) + AMP + diphosphate. The polypeptide is Cysteine--tRNA ligase (Corynebacterium diphtheriae (strain ATCC 700971 / NCTC 13129 / Biotype gravis)).